The sequence spans 178 residues: uncharacterized protein (178 aa).

The first 20 residues, 1 to 20 (MKKLLVASLALLILTPVALA), serve as a signal peptide directing secretion.

This is an uncharacterized protein from Archaeoglobus fulgidus (strain ATCC 49558 / DSM 4304 / JCM 9628 / NBRC 100126 / VC-16).